The following is a 177-amino-acid chain: ATP synthase subunit delta (177 aa).

This sequence belongs to the ATPase delta chain family. F-type ATPases have 2 components, F(1) - the catalytic core - and F(0) - the membrane proton channel. F(1) has five subunits: alpha(3), beta(3), gamma(1), delta(1), epsilon(1). F(0) has three main subunits: a(1), b(2) and c(10-14). The alpha and beta chains form an alternating ring which encloses part of the gamma chain. F(1) is attached to F(0) by a central stalk formed by the gamma and epsilon chains, while a peripheral stalk is formed by the delta and b chains.

It is found in the cell inner membrane. Functionally, f(1)F(0) ATP synthase produces ATP from ADP in the presence of a proton or sodium gradient. F-type ATPases consist of two structural domains, F(1) containing the extramembraneous catalytic core and F(0) containing the membrane proton channel, linked together by a central stalk and a peripheral stalk. During catalysis, ATP synthesis in the catalytic domain of F(1) is coupled via a rotary mechanism of the central stalk subunits to proton translocation. This protein is part of the stalk that links CF(0) to CF(1). It either transmits conformational changes from CF(0) to CF(1) or is implicated in proton conduction. The chain is ATP synthase subunit delta from Psychromonas ingrahamii (strain DSM 17664 / CCUG 51855 / 37).